The primary structure comprises 512 residues: Colistin resistance protein EmrB (512 aa).

14 helical membrane-spanning segments follow: residues 17 to 37, 55 to 75, 84 to 104, 115 to 135, 144 to 164, 169 to 189, 205 to 225, 234 to 254, 280 to 300, 314 to 334, 341 to 361, 376 to 396, 412 to 432, and 486 to 506; these read WAIF…IQIV, VTWV…MSSI, VYYT…ALSW, IQGF…YLLF, LVMF…IGGW, FSWH…ATVI, SMDW…EYFL, LADT…MIFF, ITTF…PVFL, VMMV…WLIP, TVFV…HLSI, GIGL…TLPL, IGGA…TAMH, and FNDL…LTIF.

It belongs to the major facilitator superfamily. EmrB family.

It is found in the cell inner membrane. Its function is as follows. Probably part of an efflux pump system that contributes to adaptation to osmotic stress and resistance to colistin. The chain is Colistin resistance protein EmrB from Acinetobacter baumannii (strain ATCC 17978 / DSM 105126 / CIP 53.77 / LMG 1025 / NCDC KC755 / 5377).